The sequence spans 201 residues: tRNA (guanine-N(7)-)-methyltransferase (201 aa).

Positions 34, 59, 86, and 107 each coordinate S-adenosyl-L-methionine. The active site involves Asp-107. Residues Lys-111, Asp-143, and Thr-181–Glu-184 contribute to the substrate site.

Belongs to the class I-like SAM-binding methyltransferase superfamily. TrmB family.

It catalyses the reaction guanosine(46) in tRNA + S-adenosyl-L-methionine = N(7)-methylguanosine(46) in tRNA + S-adenosyl-L-homocysteine. The protein operates within tRNA modification; N(7)-methylguanine-tRNA biosynthesis. Functionally, catalyzes the formation of N(7)-methylguanine at position 46 (m7G46) in tRNA. The polypeptide is tRNA (guanine-N(7)-)-methyltransferase (Mycoplasma mobile (strain ATCC 43663 / 163K / NCTC 11711) (Mesomycoplasma mobile)).